A 75-amino-acid chain; its full sequence is Bacteriocin lactococcin-A (75 aa).

The propeptide occupies 1-21 (MKNQLNFNIVSDEELSEANGG). A helical transmembrane segment spans residues 30–52 (AAGDLYYNTNTHKYVYQQTQNAF).

The protein resides in the secreted. It localises to the host cell membrane. Functionally, kills Lactococci. In Lactococcus lactis subsp. cremoris (Streptococcus cremoris), this protein is Bacteriocin lactococcin-A (lcnA).